Consider the following 620-residue polypeptide: 1-deoxy-D-xylulose-5-phosphate synthase (620 aa).

Thiamine diphosphate-binding positions include H80 and 121–123; that span reads GHS. Mg(2+) is bound at residue D152. Thiamine diphosphate-binding positions include 153 to 154, N181, Y288, and E370; that span reads GA. Mg(2+) is bound at residue N181.

Belongs to the transketolase family. DXPS subfamily. As to quaternary structure, homodimer. Mg(2+) serves as cofactor. It depends on thiamine diphosphate as a cofactor.

The catalysed reaction is D-glyceraldehyde 3-phosphate + pyruvate + H(+) = 1-deoxy-D-xylulose 5-phosphate + CO2. The protein operates within metabolic intermediate biosynthesis; 1-deoxy-D-xylulose 5-phosphate biosynthesis; 1-deoxy-D-xylulose 5-phosphate from D-glyceraldehyde 3-phosphate and pyruvate: step 1/1. Its function is as follows. Catalyzes the acyloin condensation reaction between C atoms 2 and 3 of pyruvate and glyceraldehyde 3-phosphate to yield 1-deoxy-D-xylulose-5-phosphate (DXP). This chain is 1-deoxy-D-xylulose-5-phosphate synthase, found in Klebsiella pneumoniae subsp. pneumoniae (strain ATCC 700721 / MGH 78578).